The sequence spans 731 residues: Dynein axonemal intermediate chain 7 (731 aa).

2 disordered regions span residues 1–50 and 285–320; these read MPPK…NERL and QNTE…VRSE. 2 stretches are compositionally biased toward basic and acidic residues: residues 17-50 and 296-320; these read KAEK…NERL and GKME…VRSE.

It belongs to the DNAI7 family. In terms of assembly, part of the multisubunit axonemal dynein complex formed at least of two heavy chains and a number of intermediate and light chains.

It is found in the cell projection. The protein resides in the cilium. It localises to the cytoplasm. In terms of biological role, via its association with the multisubunit axonemal dynein complex, may be potentially involved in the regulation of cilia function. This Danio rerio (Zebrafish) protein is Dynein axonemal intermediate chain 7 (dnai7).